The sequence spans 952 residues: RNA polymerase-associated protein RapA (952 aa).

One can recognise a Helicase ATP-binding domain in the interval 164 to 334; sequence EVGRRYAPRV…FARLRLLDPD (171 aa). 177 to 184 lines the ATP pocket; that stretch reads DEVGLGKT. The short motif at 280–283 is the DEAH box element; the sequence is DEAH. A Helicase C-terminal domain is found at 492–668; the sequence is RVNWLLELLK…GKSDGLESLI (177 aa).

Belongs to the SNF2/RAD54 helicase family. RapA subfamily. As to quaternary structure, interacts with the RNAP. Has a higher affinity for the core RNAP than for the holoenzyme. Its ATPase activity is stimulated by binding to RNAP.

Its function is as follows. Transcription regulator that activates transcription by stimulating RNA polymerase (RNAP) recycling in case of stress conditions such as supercoiled DNA or high salt concentrations. Probably acts by releasing the RNAP, when it is trapped or immobilized on tightly supercoiled DNA. Does not activate transcription on linear DNA. Probably not involved in DNA repair. The polypeptide is RNA polymerase-associated protein RapA (Aliivibrio fischeri (strain ATCC 700601 / ES114) (Vibrio fischeri)).